The chain runs to 394 residues: Lipid-A-disaccharide synthase (394 aa).

This sequence belongs to the LpxB family.

It carries out the reaction 2-N,3-O-bis[(3R)-3-hydroxytetradecanoyl]-alpha-D-glucosaminyl 1-phosphate + UDP-2-N,3-O-bis[(3R)-3-hydroxytetradecanoyl]-alpha-D-glucosamine = lipid A disaccharide (E. coli) + UDP + H(+). The catalysed reaction is a lipid X + a UDP-2-N,3-O-bis[(3R)-3-hydroxyacyl]-alpha-D-glucosamine = a lipid A disaccharide + UDP + H(+). It participates in glycolipid biosynthesis; lipid IV(A) biosynthesis; lipid IV(A) from (3R)-3-hydroxytetradecanoyl-[acyl-carrier-protein] and UDP-N-acetyl-alpha-D-glucosamine: step 5/6. Condensation of UDP-2,3-diacylglucosamine and 2,3-diacylglucosamine-1-phosphate to form lipid A disaccharide, a precursor of lipid A, a phosphorylated glycolipid that anchors the lipopolysaccharide to the outer membrane of the cell. This chain is Lipid-A-disaccharide synthase, found in Yersinia pestis.